Reading from the N-terminus, the 201-residue chain is 3-isopropylmalate dehydratase small subunit (201 aa).

Belongs to the LeuD family. LeuD type 1 subfamily. In terms of assembly, heterodimer of LeuC and LeuD.

The catalysed reaction is (2R,3S)-3-isopropylmalate = (2S)-2-isopropylmalate. It participates in amino-acid biosynthesis; L-leucine biosynthesis; L-leucine from 3-methyl-2-oxobutanoate: step 2/4. In terms of biological role, catalyzes the isomerization between 2-isopropylmalate and 3-isopropylmalate, via the formation of 2-isopropylmaleate. This chain is 3-isopropylmalate dehydratase small subunit, found in Escherichia fergusonii (strain ATCC 35469 / DSM 13698 / CCUG 18766 / IAM 14443 / JCM 21226 / LMG 7866 / NBRC 102419 / NCTC 12128 / CDC 0568-73).